Here is a 482-residue protein sequence, read N- to C-terminus: Anthranilate synthase component 1 (482 aa).

L-tryptophan-binding positions include Ser-47 and 267–269 (PYM). 302-303 (GT) is a binding site for chorismate. Mg(2+) is bound at residue Glu-329. Chorismate is bound by residues Tyr-417, Arg-437, 451 to 453 (GGG), and Gly-453. Residue Glu-466 participates in Mg(2+) binding.

It belongs to the anthranilate synthase component I family. Heterotetramer consisting of two non-identical subunits: a beta subunit (TrpG) and a large alpha subunit (TrpE). Requires Mg(2+) as cofactor.

It carries out the reaction chorismate + L-glutamine = anthranilate + pyruvate + L-glutamate + H(+). The protein operates within amino-acid biosynthesis; L-tryptophan biosynthesis; L-tryptophan from chorismate: step 1/5. Feedback inhibited by tryptophan. In terms of biological role, part of a heterotetrameric complex that catalyzes the two-step biosynthesis of anthranilate, an intermediate in the biosynthesis of L-tryptophan. In the first step, the glutamine-binding beta subunit (TrpG) of anthranilate synthase (AS) provides the glutamine amidotransferase activity which generates ammonia as a substrate that, along with chorismate, is used in the second step, catalyzed by the large alpha subunit of AS (TrpE) to produce anthranilate. In the absence of TrpG, TrpE can synthesize anthranilate directly from chorismate and high concentrations of ammonia. This is Anthranilate synthase component 1 (trpE) from Spirochaeta aurantia.